The following is a 272-amino-acid chain: D-aminoacyl-tRNA deacylase (272 aa).

Belongs to the DtdA deacylase family. Monomer. Requires Zn(2+) as cofactor.

The enzyme catalyses a D-aminoacyl-tRNA + H2O = a tRNA + a D-alpha-amino acid + H(+). The catalysed reaction is glycyl-tRNA(Ala) + H2O = tRNA(Ala) + glycine + H(+). D-aminoacyl-tRNA deacylase with broad substrate specificity. By recycling D-aminoacyl-tRNA to D-amino acids and free tRNA molecules, this enzyme counteracts the toxicity associated with the formation of D-aminoacyl-tRNA entities in vivo. The chain is D-aminoacyl-tRNA deacylase from Hyperthermus butylicus (strain DSM 5456 / JCM 9403 / PLM1-5).